The chain runs to 141 residues: Cholinesterase (141 aa).

Asn-39 carries N-linked (GlcNAc...) asparagine glycosylation. Position 49–50 (49–50 (GS)) interacts with substrate. The active-site Acyl-ester intermediate is the Ser-131. The residue at position 131 (Ser-131) is a Phosphoserine.

It belongs to the type-B carboxylesterase/lipase family. Homotetramer; disulfide-linked. Dimer of dimers. Present in most cells except erythrocytes.

The protein resides in the secreted. It catalyses the reaction an acylcholine + H2O = a carboxylate + choline + H(+). In terms of biological role, esterase with broad substrate specificity. Contributes to the inactivation of the neurotransmitter acetylcholine. Can degrade neurotoxic organophosphate esters. The sequence is that of Cholinesterase (BCHE) from Ovis aries (Sheep).